The primary structure comprises 393 residues: tRNA(Met) cytidine acetate ligase (393 aa).

Gly-81, Asn-142, and Arg-167 together coordinate ATP.

The protein belongs to the TmcAL family.

It localises to the cytoplasm. It catalyses the reaction cytidine(34) in elongator tRNA(Met) + acetate + ATP = N(4)-acetylcytidine(34) in elongator tRNA(Met) + AMP + diphosphate. Functionally, catalyzes the formation of N(4)-acetylcytidine (ac(4)C) at the wobble position of elongator tRNA(Met), using acetate and ATP as substrates. First activates an acetate ion to form acetyladenylate (Ac-AMP) and then transfers the acetyl group to tRNA to form ac(4)C34. In Bacillus cereus (strain 03BB102), this protein is tRNA(Met) cytidine acetate ligase.